A 299-amino-acid polypeptide reads, in one-letter code: Protein U23 (299 aa).

The signal sequence occupies residues 1 to 27 (MRKSEFNAKSCFLMIGICVFNLNSSSC). A helical transmembrane segment spans residues 247–267 (LVIWICGISFVGAFIIVIVIL).

The protein resides in the host membrane. This chain is Protein U23 (U23), found in Human herpesvirus 6B (strain Z29) (HHV-6 variant B).